The primary structure comprises 161 residues: Phosphopantetheine adenylyltransferase (161 aa).

It belongs to the eukaryotic CoaD family.

It localises to the cytoplasm. It carries out the reaction (R)-4'-phosphopantetheine + ATP + H(+) = 3'-dephospho-CoA + diphosphate. It participates in cofactor biosynthesis; coenzyme A biosynthesis. Its function is as follows. Reversibly transfers an adenylyl group from ATP to 4'-phosphopantetheine, yielding dephospho-CoA (dPCoA) and pyrophosphate. The protein is Phosphopantetheine adenylyltransferase of Methanosarcina barkeri (strain Fusaro / DSM 804).